A 105-amino-acid polypeptide reads, in one-letter code: Met repressor (105 aa).

The protein belongs to the MetJ family. As to quaternary structure, homodimer.

Its subcellular location is the cytoplasm. This regulatory protein, when combined with SAM (S-adenosylmethionine) represses the expression of the methionine regulon and of enzymes involved in SAM synthesis. This Yersinia enterocolitica serotype O:8 / biotype 1B (strain NCTC 13174 / 8081) protein is Met repressor.